We begin with the raw amino-acid sequence, 429 residues long: UDP-N-acetylglucosamine 1-carboxyvinyltransferase (429 aa).

22-23 is a phosphoenolpyruvate binding site; it reads KN. A UDP-N-acetyl-alpha-D-glucosamine-binding site is contributed by R102. The active-site Proton donor is the C126. C126 bears the 2-(S-cysteinyl)pyruvic acid O-phosphothioketal mark. Residues 171–174, D316, and I338 contribute to the UDP-N-acetyl-alpha-D-glucosamine site; that span reads KVSV.

It belongs to the EPSP synthase family. MurA subfamily.

It is found in the cytoplasm. It catalyses the reaction phosphoenolpyruvate + UDP-N-acetyl-alpha-D-glucosamine = UDP-N-acetyl-3-O-(1-carboxyvinyl)-alpha-D-glucosamine + phosphate. The protein operates within cell wall biogenesis; peptidoglycan biosynthesis. In terms of biological role, cell wall formation. Adds enolpyruvyl to UDP-N-acetylglucosamine. In Xanthobacter autotrophicus (strain ATCC BAA-1158 / Py2), this protein is UDP-N-acetylglucosamine 1-carboxyvinyltransferase.